The primary structure comprises 220 residues: Deoxyribose-phosphate aldolase (220 aa).

The Proton donor/acceptor role is filled by Asp89. The active-site Schiff-base intermediate with acetaldehyde is the Lys151. Lys180 (proton donor/acceptor) is an active-site residue.

Belongs to the DeoC/FbaB aldolase family. DeoC type 1 subfamily.

The protein resides in the cytoplasm. The enzyme catalyses 2-deoxy-D-ribose 5-phosphate = D-glyceraldehyde 3-phosphate + acetaldehyde. The protein operates within carbohydrate degradation; 2-deoxy-D-ribose 1-phosphate degradation; D-glyceraldehyde 3-phosphate and acetaldehyde from 2-deoxy-alpha-D-ribose 1-phosphate: step 2/2. Functionally, catalyzes a reversible aldol reaction between acetaldehyde and D-glyceraldehyde 3-phosphate to generate 2-deoxy-D-ribose 5-phosphate. The protein is Deoxyribose-phosphate aldolase of Streptococcus pneumoniae serotype 19F (strain G54).